We begin with the raw amino-acid sequence, 331 residues long: Anthranilate phosphoribosyltransferase (331 aa).

Residues G79, 82–83, S87, 89–92, 107–115, and S119 each bind 5-phospho-alpha-D-ribose 1-diphosphate; these read GD, NIST, and KHCNGNISS. Residue G79 coordinates anthranilate. Mg(2+) is bound at residue S91. N110 is an anthranilate binding site. R165 provides a ligand contact to anthranilate. The Mg(2+) site is built by D223 and E224.

It belongs to the anthranilate phosphoribosyltransferase family. In terms of assembly, homodimer. Mg(2+) serves as cofactor.

It carries out the reaction N-(5-phospho-beta-D-ribosyl)anthranilate + diphosphate = 5-phospho-alpha-D-ribose 1-diphosphate + anthranilate. It functions in the pathway amino-acid biosynthesis; L-tryptophan biosynthesis; L-tryptophan from chorismate: step 2/5. Its function is as follows. Catalyzes the transfer of the phosphoribosyl group of 5-phosphorylribose-1-pyrophosphate (PRPP) to anthranilate to yield N-(5'-phosphoribosyl)-anthranilate (PRA). In Buchnera aphidicola subsp. Baizongia pistaciae (strain Bp), this protein is Anthranilate phosphoribosyltransferase.